The primary structure comprises 391 residues: NADH-quinone oxidoreductase subunit D (391 aa).

This sequence belongs to the complex I 49 kDa subunit family. As to quaternary structure, NDH-1 is composed of 14 different subunits. Subunits NuoB, C, D, E, F, and G constitute the peripheral sector of the complex.

The protein resides in the cell inner membrane. It carries out the reaction a quinone + NADH + 5 H(+)(in) = a quinol + NAD(+) + 4 H(+)(out). In terms of biological role, NDH-1 shuttles electrons from NADH, via FMN and iron-sulfur (Fe-S) centers, to quinones in the respiratory chain. The immediate electron acceptor for the enzyme in this species is believed to be ubiquinone. Couples the redox reaction to proton translocation (for every two electrons transferred, four hydrogen ions are translocated across the cytoplasmic membrane), and thus conserves the redox energy in a proton gradient. This chain is NADH-quinone oxidoreductase subunit D, found in Rickettsia massiliae (strain Mtu5).